A 558-amino-acid polypeptide reads, in one-letter code: Atlastin-1 (558 aa).

The interval 1 to 28 (MAKNRRDRNSWGGFSEKTYEWSSEEEEP) is disordered. Residues 1–34 (MAKNRRDRNSWGGFSEKTYEWSSEEEEPVKKAGP) are N-terminal hypervariable region (HVR). At 1–449 (MAKNRRDRNS…NIFHAARTPA (449 aa)) the chain is on the cytoplasmic side. Phosphoserine is present on residues Ser10, Ser22, and Ser23. Residues 64–309 (DKEVVAVSVA…LIPWLLSPES (246 aa)) enclose the GB1/RHD3-type G domain. Arg77, Lys78, Gly79, Lys80, Ser81, Phe82, Gln148, Arg217, Asp218, Val276, and Asn279 together coordinate GDP. Residues Arg77, Lys78, Gly79, Lys80, Ser81, and Phe82 each coordinate GTP. Position 81 (Ser81) interacts with Mg(2+). Residues Arg217, Asp218, and Val276 each contribute to the GTP site. The tract at residues 347 to 438 (MLQATAEANN…YIQYIKHNDS (92 aa)) is 3HB (three-helix bundle) domain. An N6-acetyllysine modification is found at Lys395. A coiled-coil region spans residues 418–439 (LQQLETEIDELYIQYIKHNDSK). The segment at 439–447 (KNIFHAART) is linker. The chain crosses the membrane as a helical span at residues 450 to 470 (TLFVVIFITYVIAGVTGFIGL). Residue Asp471 is a topological domain, lumenal. A helical transmembrane segment spans residues 472–492 (IIASLCNMIMGLTLITLCTWA). Residues 493–558 (YIRYSGEYRE…STEQSEKKKM (66 aa)) are Cytoplasmic-facing. The interval 521-558 (NEALYKLYSAAATHRHLYHQAFPAPKSESTEQSEKKKM) is autoinhibitory domain.

This sequence belongs to the TRAFAC class dynamin-like GTPase superfamily. GB1/RHD3 GTPase family. GB1 subfamily. As to quaternary structure, monomeric and homodimeric. The homodimer, transiently formed by two molecules on opposing membranes, is the active form mediating ER membrane fusion. Interacts with REEP1, REEP5, RTN3 and RTN4 (via the transmembrane region); these proteins are involved in endoplasmic reticulum tubular network organization. Interacts with ZFYVE27; both proteins are involved in endoplasmic reticulum tubular network organization. Interacts with ARL6IP1; both proteins are involved in endoplasmic reticulum tubular network organization. Interacts with SPAST; the interaction is direct, could recruit SPAST to Golgi membranes. Interacts (via N-terminal region) with MAP4K4 (via CNH regulatory domain). May interact with TMED2. Interacts with CPT1C. In terms of processing, phosphorylated. Phosphorylation, by different kinases, of the N-terminal hypervariable region (HVR) regulates the ATL1-mediated membrane tethering step.

The protein localises to the endoplasmic reticulum membrane. It is found in the golgi apparatus membrane. The protein resides in the cell projection. It localises to the axon. It catalyses the reaction GTP + H2O = GDP + phosphate + H(+). Functionally, atlastin-1 (ATL1) is a membrane-anchored GTPase that mediates the GTP-dependent fusion of endoplasmic reticulum (ER) membranes, maintaining the continuous ER network. It facilitates the formation of three-way junctions where ER tubules intersect. Two atlastin-1 on neighboring ER tubules bind GTP and form loose homodimers through the GB1/RHD3-type G domains and 3HB regions. Upon GTP hydrolysis, the 3HB regions tighten, pulling the membranes together to drive their fusion. After fusion, the homodimer disassembles upon release of inorganic phosphate (Pi). Subsequently, GDP dissociates, resetting the monomers to a conformation ready for a new fusion cycle. May also regulate more or less directly Golgi biogenesis. Indirectly regulates axonal development. The chain is Atlastin-1 from Bos taurus (Bovine).